Here is a 101-residue protein sequence, read N- to C-terminus: Small ribosomal subunit protein bS18c (101 aa).

Belongs to the bacterial ribosomal protein bS18 family. Part of the 30S ribosomal subunit.

It is found in the plastid. The protein resides in the chloroplast. This Populus alba (White poplar) protein is Small ribosomal subunit protein bS18c.